A 256-amino-acid polypeptide reads, in one-letter code: NAD-dependent protein deacetylase (256 aa).

The Deacetylase sirtuin-type domain occupies M1–E254. NAD(+)-binding residues include A28, T32, F39, R40, Q105, I107, D108, and H123. F39 contacts nicotinamide. Residues I107 and D108 each contribute to the nicotinamide site. The active-site Proton acceptor is the H123. C131, C134, C156, and C159 together coordinate Zn(2+). The NAD(+) site is built by T197, S198, and N222.

This sequence belongs to the sirtuin family. Class U subfamily. The cofactor is Zn(2+).

The protein localises to the cytoplasm. It catalyses the reaction N(6)-acetyl-L-lysyl-[protein] + NAD(+) + H2O = 2''-O-acetyl-ADP-D-ribose + nicotinamide + L-lysyl-[protein]. In terms of biological role, NAD-dependent protein deacetylase which modulates the activities of several enzymes which are inactive in their acetylated form. This chain is NAD-dependent protein deacetylase, found in Thermodesulfovibrio yellowstonii (strain ATCC 51303 / DSM 11347 / YP87).